The following is a 554-amino-acid chain: Arginine--tRNA ligase (554 aa).

The short motif at 132–142 is the 'HIGH' region element; that stretch reads ANPTGPLHIGH.

It belongs to the class-I aminoacyl-tRNA synthetase family. As to quaternary structure, monomer.

The protein resides in the cytoplasm. The enzyme catalyses tRNA(Arg) + L-arginine + ATP = L-arginyl-tRNA(Arg) + AMP + diphosphate. In Pseudarthrobacter chlorophenolicus (strain ATCC 700700 / DSM 12829 / CIP 107037 / JCM 12360 / KCTC 9906 / NCIMB 13794 / A6) (Arthrobacter chlorophenolicus), this protein is Arginine--tRNA ligase.